The primary structure comprises 692 residues: Formate hydrogenlyase transcriptional activator FhlA (692 aa).

Positions 202–344 (DMDELVSEVA…QIAERVAIAV (143 aa)) constitute a GAF domain. Residues 381-610 (IIGRSEAMYS…LENVIERAVL (230 aa)) enclose the Sigma-54 factor interaction domain. Residues 409–416 (GETGTGKE) and 472–481 (ADKSSLFLDE) contribute to the ATP site. Residues 663–682 (PKGAAQRLGLKRTTLLSRMK) constitute a DNA-binding region (H-T-H motif).

Required for induction of expression of the formate dehydrogenase H and hydrogenase-3 structural genes. Also activates expression of hyf operon (encodes the silent hydrogenase-4 gene cluster). This is Formate hydrogenlyase transcriptional activator FhlA (fhlA) from Escherichia coli (strain K12).